We begin with the raw amino-acid sequence, 961 residues long: Exportin-T (961 aa).

Belongs to the exportin family.

It is found in the cytoplasm. The protein localises to the nucleus. Functionally, mediates the nuclear export of aminoacylated tRNAs. The sequence is that of Exportin-T (xpot) from Danio rerio (Zebrafish).